The following is a 158-amino-acid chain: 6,7-dimethyl-8-ribityllumazine synthase (158 aa).

5-amino-6-(D-ribitylamino)uracil is bound by residues Phe22, 57-59, and 84-86; these read AYE and TVI. 89 to 90 serves as a coordination point for (2S)-2-hydroxy-3-oxobutyl phosphate; that stretch reads GT. The active-site Proton donor is the His92. Position 117 (Phe117) interacts with 5-amino-6-(D-ribitylamino)uracil. Residue Arg131 participates in (2S)-2-hydroxy-3-oxobutyl phosphate binding.

Belongs to the DMRL synthase family. In terms of assembly, forms an icosahedral capsid composed of 60 subunits, arranged as a dodecamer of pentamers.

The enzyme catalyses (2S)-2-hydroxy-3-oxobutyl phosphate + 5-amino-6-(D-ribitylamino)uracil = 6,7-dimethyl-8-(1-D-ribityl)lumazine + phosphate + 2 H2O + H(+). It functions in the pathway cofactor biosynthesis; riboflavin biosynthesis; riboflavin from 2-hydroxy-3-oxobutyl phosphate and 5-amino-6-(D-ribitylamino)uracil: step 1/2. Catalyzes the formation of 6,7-dimethyl-8-ribityllumazine by condensation of 5-amino-6-(D-ribitylamino)uracil with 3,4-dihydroxy-2-butanone 4-phosphate. This is the penultimate step in the biosynthesis of riboflavin. This is 6,7-dimethyl-8-ribityllumazine synthase from Pectobacterium atrosepticum (strain SCRI 1043 / ATCC BAA-672) (Erwinia carotovora subsp. atroseptica).